A 323-amino-acid polypeptide reads, in one-letter code: Annexin A3 (323 aa).

Residue A2 is modified to N-acetylalanine. Annexin repeat units lie at residues 18–89 (FNPS…ALVT), 90–161 (PPAV…ILAN), 173–245 (QLAR…AIVR), and 249–320 (NTPA…KICG). Position 177 is an N6-acetyllysine (K177). T267 carries the phosphothreonine modification.

It belongs to the annexin family.

In terms of biological role, inhibitor of phospholipase A2, also possesses anti-coagulant properties. Also cleaves the cyclic bond of inositol 1,2-cyclic phosphate to form inositol 1-phosphate. The protein is Annexin A3 (ANXA3) of Bos taurus (Bovine).